A 197-amino-acid chain; its full sequence is MKTPWKFLARLASRQPSGKTQESSAGNDTGSKTLEHTSALPPSPTVAASPLARNEDVSVDQGPIASDKPAGHNGVAQALEPPIHADEAQTTARDEADQSGAEANSLAPKSTASTKSQRKPRIKRRERGKRANARVDAQSAVVQKHYQNLQQSSSRDLFFHELATLDEEIKMLRTQLAQKLHLQNVQLKKMLERFELS.

Residues 1–135 form a disordered region; sequence MKTPWKFLAR…ERGKRANARV (135 aa). The span at 14–32 shows a compositional bias: polar residues; the sequence is RQPSGKTQESSAGNDTGSK. Residues 83 to 96 show a composition bias toward basic and acidic residues; the sequence is IHADEAQTTARDEA. Basic residues predominate over residues 116–132; sequence SQRKPRIKRRERGKRAN.

It to Rhizobium NGR234A y4nF and y4aO.

This is an uncharacterized protein from Rhizobium meliloti (strain 1021) (Ensifer meliloti).